The following is a 193-amino-acid chain: Holliday junction branch migration complex subunit RuvA (193 aa).

The tract at residues 1-64 (MIGRIAGILL…EDAHLLYGFL (64 aa)) is domain I. Residues 65-139 (TPQERTTFRE…GKLGADLGAL (75 aa)) are domain II. Residues 139-143 (LAGAA) are flexible linker. The segment at 144–193 (SQSDHATDILNALVALGYSEKEGLAAIKNVPAGTGVSEGIKLALKALSKV) is domain III.

It belongs to the RuvA family. As to quaternary structure, homotetramer. Forms an RuvA(8)-RuvB(12)-Holliday junction (HJ) complex. HJ DNA is sandwiched between 2 RuvA tetramers; dsDNA enters through RuvA and exits via RuvB. An RuvB hexamer assembles on each DNA strand where it exits the tetramer. Each RuvB hexamer is contacted by two RuvA subunits (via domain III) on 2 adjacent RuvB subunits; this complex drives branch migration. In the full resolvosome a probable DNA-RuvA(4)-RuvB(12)-RuvC(2) complex forms which resolves the HJ.

Its subcellular location is the cytoplasm. The RuvA-RuvB-RuvC complex processes Holliday junction (HJ) DNA during genetic recombination and DNA repair, while the RuvA-RuvB complex plays an important role in the rescue of blocked DNA replication forks via replication fork reversal (RFR). RuvA specifically binds to HJ cruciform DNA, conferring on it an open structure. The RuvB hexamer acts as an ATP-dependent pump, pulling dsDNA into and through the RuvAB complex. HJ branch migration allows RuvC to scan DNA until it finds its consensus sequence, where it cleaves and resolves the cruciform DNA. The chain is Holliday junction branch migration complex subunit RuvA from Burkholderia ambifaria (strain MC40-6).